A 430-amino-acid chain; its full sequence is Gamma-glutamyl phosphate reductase (430 aa).

Belongs to the gamma-glutamyl phosphate reductase family.

It localises to the cytoplasm. It catalyses the reaction L-glutamate 5-semialdehyde + phosphate + NADP(+) = L-glutamyl 5-phosphate + NADPH + H(+). Its pathway is amino-acid biosynthesis; L-proline biosynthesis; L-glutamate 5-semialdehyde from L-glutamate: step 2/2. Functionally, catalyzes the NADPH-dependent reduction of L-glutamate 5-phosphate into L-glutamate 5-semialdehyde and phosphate. The product spontaneously undergoes cyclization to form 1-pyrroline-5-carboxylate. This chain is Gamma-glutamyl phosphate reductase, found in Corynebacterium diphtheriae (strain ATCC 700971 / NCTC 13129 / Biotype gravis).